Reading from the N-terminus, the 100-residue chain is Aspartyl/glutamyl-tRNA(Asn/Gln) amidotransferase subunit C (100 aa).

This sequence belongs to the GatC family. In terms of assembly, heterotrimer of A, B and C subunits.

The catalysed reaction is L-glutamyl-tRNA(Gln) + L-glutamine + ATP + H2O = L-glutaminyl-tRNA(Gln) + L-glutamate + ADP + phosphate + H(+). The enzyme catalyses L-aspartyl-tRNA(Asn) + L-glutamine + ATP + H2O = L-asparaginyl-tRNA(Asn) + L-glutamate + ADP + phosphate + 2 H(+). Allows the formation of correctly charged Asn-tRNA(Asn) or Gln-tRNA(Gln) through the transamidation of misacylated Asp-tRNA(Asn) or Glu-tRNA(Gln) in organisms which lack either or both of asparaginyl-tRNA or glutaminyl-tRNA synthetases. The reaction takes place in the presence of glutamine and ATP through an activated phospho-Asp-tRNA(Asn) or phospho-Glu-tRNA(Gln). The polypeptide is Aspartyl/glutamyl-tRNA(Asn/Gln) amidotransferase subunit C (Janthinobacterium sp. (strain Marseille) (Minibacterium massiliensis)).